The chain runs to 290 residues: Pre-mRNA-splicing factor cwf20 (290 aa).

Disordered regions lie at residues 1–61 (MSLV…KSSF) and 114–134 (PNNS…KKST). The span at 114-128 (PNNSVSDLTSTGSSE) shows a compositional bias: polar residues.

Belongs to the 40S cdc5-associated complex (or cwf complex), a spliceosome sub-complex reminiscent of a late-stage spliceosome composed of the U2, U5 and U6 snRNAs and at least brr2, cdc5, cwf2/prp3, cwf3/syf1, cwf4/syf3, cwf5/ecm2, spp42/cwf6, cwf7/spf27, cwf8, cwf9, cwf10, cwf11, cwf12, prp45/cwf13, cwf14, cwf15, cwf16, cwf17, cwf18, cwf19, cwf20, cwf21, cwf22, cwf23, cwf24, cwf25, cwf26, cyp7/cwf27, cwf28, cwf29/ist3, lea1, msl1, prp5/cwf1, prp10, prp12/sap130, prp17, prp22, sap61, sap62, sap114, sap145, slu7, smb1, smd1, smd3, smf1, smg1 and syf2.

The protein resides in the nucleus. Involved in mRNA splicing where it associates with cdc5 and the other cwf proteins as part of the spliceosome. This Schizosaccharomyces pombe (strain 972 / ATCC 24843) (Fission yeast) protein is Pre-mRNA-splicing factor cwf20 (cwf20).